The chain runs to 341 residues: MSGVGCILGIETSCDETAVAVLNQRSVLSHEVLSQKEHSSFGGVVPEIAARAHSDFLHVLVSKAMGGAHIGFSDLSAIAVTSGPGLVGSLIVGVMLAKAIAYVAHKPIIAVNHLEAHALVARMIYADLEFPFLVLIISGGHCQFLIAHDVGRYTKLGESVDDSLGESFDKVARMLGLGYPGGPEVESCALKGDAHRFPFPRALKSRPGCNFSFSGLKTAVRYTIAKEGKLDNQALYDICASFQQCVGEILVSRIANAMAAAKSADSSISKMVVSGGVAANNFLRGSIRKCANELGFDAIFPPQELCTDNGIMVGWAGLENLRKGNFSSLELIPRARWPLCP.

Fe cation-binding residues include H113 and H117. Residues 136-140 (IISGG), D169, G182, and N280 contribute to the substrate site. D308 provides a ligand contact to Fe cation.

Belongs to the KAE1 / TsaD family. Fe(2+) serves as cofactor.

The protein resides in the cytoplasm. It carries out the reaction L-threonylcarbamoyladenylate + adenosine(37) in tRNA = N(6)-L-threonylcarbamoyladenosine(37) in tRNA + AMP + H(+). In terms of biological role, required for the formation of a threonylcarbamoyl group on adenosine at position 37 (t(6)A37) in tRNAs that read codons beginning with adenine. Is involved in the transfer of the threonylcarbamoyl moiety of threonylcarbamoyl-AMP (TC-AMP) to the N6 group of A37, together with TsaE and TsaB. TsaD likely plays a direct catalytic role in this reaction. This chain is tRNA N6-adenosine threonylcarbamoyltransferase, found in Anaplasma marginale (strain St. Maries).